We begin with the raw amino-acid sequence, 383 residues long: uncharacterized protein (383 aa).

The segment at 1–55 (MSSKLTVNAHYSPLKDEDPLDHIDSQTALDSMETDSTGKSSLYFSKSDDPLSKDI) is disordered. Basic and acidic residues predominate over residues 13-24 (PLKDEDPLDHID). Over residues 25-44 (SQTALDSMETDSTGKSSLYF) the composition is skewed to polar residues. A compositionally biased stretch (basic and acidic residues) spans 46–55 (KSDDPLSKDI). 10 consecutive transmembrane segments (helical) span residues 87 to 107 (LTIFFAVSSQIVFAILVTILN), 112 to 132 (NIINAPLLMLSFQMAFTSLMV), 157 to 177 (FIFVKILGIVSKTYCLAFVPV), 179 to 199 (FYQISRGLLLPFTILLSFVLL), 205 to 225 (LFPFGGCLLVMLGFGFGVRFE), 228 to 248 (VAPIGIILGVWSSFTTAIESV), 262 to 282 (LIYIFSALMSVFCLLLSVASL), 299 to 319 (FFIVLILSSLSNFYLNIATFT), 329 to 349 (YMISVSARSILQTLLAVAFLG), and 352 to 372 (LYGNRIYGVILILVGTLLYTL).

Belongs to the TPT transporter family.

The protein localises to the membrane. This is an uncharacterized protein from Schizosaccharomyces pombe (strain 972 / ATCC 24843) (Fission yeast).